Consider the following 197-residue polypeptide: Shikimate kinase (197 aa).

26 to 31 is a binding site for ATP; sequence GSGKSR. Position 30 (S30) interacts with Mg(2+). The substrate site is built by D48, R72, and G94. R132 is a binding site for ATP. Residue R150 coordinates substrate.

It belongs to the shikimate kinase family. Monomer. Mg(2+) serves as cofactor.

It localises to the cytoplasm. It catalyses the reaction shikimate + ATP = 3-phosphoshikimate + ADP + H(+). It participates in metabolic intermediate biosynthesis; chorismate biosynthesis; chorismate from D-erythrose 4-phosphate and phosphoenolpyruvate: step 5/7. In terms of biological role, catalyzes the specific phosphorylation of the 3-hydroxyl group of shikimic acid using ATP as a cosubstrate. This Prochlorococcus marinus (strain MIT 9211) protein is Shikimate kinase.